The chain runs to 492 residues: Bifunctional protein GlmU (492 aa).

The segment at 1 to 241 is pyrophosphorylase; sequence MTFRGDTAVV…SALVAGVNDR (241 aa). UDP-N-acetyl-alpha-D-glucosamine-binding positions include 12–15, K26, Q83, and 88–89; these read LAAG and GT. Position 114 (D114) interacts with Mg(2+). The UDP-N-acetyl-alpha-D-glucosamine site is built by G151, E166, N181, and N239. Position 239 (N239) interacts with Mg(2+). Positions 242–262 are linker; it reads VQLAQLGAELNRRIVAAHQMA. The N-acetyltransferase stretch occupies residues 263-492; the sequence is GVTVIDPATT…TPPPDADQTP (230 aa). Positions 344 and 362 each coordinate UDP-N-acetyl-alpha-D-glucosamine. The active-site Proton acceptor is the H374. 2 residues coordinate UDP-N-acetyl-alpha-D-glucosamine: Y377 and N388. Acetyl-CoA contacts are provided by residues A391, 397-398, and A434; that span reads NY. The interval 451–492 is disordered; it reads GGPQRNIEDWVQQKRPGTPSAEAARKASAEQSTPPPDADQTP. Residues 483 to 492 are compositionally biased toward pro residues; it reads TPPPDADQTP.

In the N-terminal section; belongs to the N-acetylglucosamine-1-phosphate uridyltransferase family. This sequence in the C-terminal section; belongs to the transferase hexapeptide repeat family. In terms of assembly, homotrimer. Requires Mg(2+) as cofactor.

The protein localises to the cytoplasm. It carries out the reaction alpha-D-glucosamine 1-phosphate + acetyl-CoA = N-acetyl-alpha-D-glucosamine 1-phosphate + CoA + H(+). It catalyses the reaction N-acetyl-alpha-D-glucosamine 1-phosphate + UTP + H(+) = UDP-N-acetyl-alpha-D-glucosamine + diphosphate. The protein operates within nucleotide-sugar biosynthesis; UDP-N-acetyl-alpha-D-glucosamine biosynthesis; N-acetyl-alpha-D-glucosamine 1-phosphate from alpha-D-glucosamine 6-phosphate (route II): step 2/2. It participates in nucleotide-sugar biosynthesis; UDP-N-acetyl-alpha-D-glucosamine biosynthesis; UDP-N-acetyl-alpha-D-glucosamine from N-acetyl-alpha-D-glucosamine 1-phosphate: step 1/1. Its pathway is bacterial outer membrane biogenesis; LPS lipid A biosynthesis. Catalyzes the last two sequential reactions in the de novo biosynthetic pathway for UDP-N-acetylglucosamine (UDP-GlcNAc). The C-terminal domain catalyzes the transfer of acetyl group from acetyl coenzyme A to glucosamine-1-phosphate (GlcN-1-P) to produce N-acetylglucosamine-1-phosphate (GlcNAc-1-P), which is converted into UDP-GlcNAc by the transfer of uridine 5-monophosphate (from uridine 5-triphosphate), a reaction catalyzed by the N-terminal domain. The chain is Bifunctional protein GlmU from Mycobacterium marinum (strain ATCC BAA-535 / M).